We begin with the raw amino-acid sequence, 47 residues long: Large ribosomal subunit protein bL34 (47 aa).

Belongs to the bacterial ribosomal protein bL34 family.

The sequence is that of Large ribosomal subunit protein bL34 from Mycobacterium avium (strain 104).